A 205-amino-acid chain; its full sequence is Lymphotoxin-alpha (205 aa).

The signal sequence occupies residues 1 to 34 (MTPPERLFLPRVCGTTLHLLLLGLLLVLLPGAQG). O-linked (GalNAc...) threonine; partial glycosylation occurs at Thr-41. The THD domain occupies 63 to 205 (PAAHLIGDPS…STVFFGAFAL (143 aa)). N-linked (GlcNAc...) asparagine glycosylation occurs at Asn-96.

Belongs to the tumor necrosis factor family. As to quaternary structure, homotrimer, and heterotrimer of either two LTB and one LTA subunits or (less prevalent) two LTA and one LTB subunits. Interacts with TNFRSF14.

The protein resides in the secreted. It localises to the membrane. Functionally, cytokine that in its homotrimeric form binds to TNFRSF1A/TNFR1, TNFRSF1B/TNFBR and TNFRSF14/HVEM. In its heterotrimeric form with LTB binds to TNFRSF3/LTBR. Lymphotoxin is produced by lymphocytes and is cytotoxic for a wide range of tumor cells in vitro and in vivo. The polypeptide is Lymphotoxin-alpha (LTA) (Homo sapiens (Human)).